A 290-amino-acid polypeptide reads, in one-letter code: Phosphatidylglycerol--prolipoprotein diacylglyceryl transferase (290 aa).

7 consecutive transmembrane segments (helical) span residues 21-41 (VSLHWYGLMYLVGFVFAMWLA), 60-80 (LLYAGFLGVFLGGRIGYVLFY), 98-118 (GGMSFHGGLIGVIVVMLWFAH), 124-144 (FFQVADFVAPMVPFGLGAGRL), 198-218 (SQLYEMLLEGVVLFIILNLFI), 224-244 (IGSVSGLFLICYGAFRILVEF), and 258-278 (VISMGQILSLPMILAGVIMMA). R143 is an a 1,2-diacyl-sn-glycero-3-phospho-(1'-sn-glycerol) binding site.

This sequence belongs to the Lgt family.

It is found in the cell inner membrane. It carries out the reaction L-cysteinyl-[prolipoprotein] + a 1,2-diacyl-sn-glycero-3-phospho-(1'-sn-glycerol) = an S-1,2-diacyl-sn-glyceryl-L-cysteinyl-[prolipoprotein] + sn-glycerol 1-phosphate + H(+). Its pathway is protein modification; lipoprotein biosynthesis (diacylglyceryl transfer). Its function is as follows. Catalyzes the transfer of the diacylglyceryl group from phosphatidylglycerol to the sulfhydryl group of the N-terminal cysteine of a prolipoprotein, the first step in the formation of mature lipoproteins. This chain is Phosphatidylglycerol--prolipoprotein diacylglyceryl transferase, found in Sodalis glossinidius (strain morsitans).